Reading from the N-terminus, the 50-residue chain is MKGDPKVIDYLNKALRHELTAINQYWLHYRLLDNWGIKDLAKKWRAESIE.

The Ferritin-like diiron domain occupies 1–50 (MKGDPKVIDYLNKALRHELTAINQYWLHYRLLDNWGIKDLAKKWRAESIE). Glu-18 serves as a coordination point for Fe cation.

It belongs to the bacterioferritin family. In terms of assembly, homooligomer of 24 subunits, arranged as 12 dimers, that are packed together to form an approximately spherical molecule with a central cavity, in which large amounts of iron can be deposited. The cofactor is heme b.

It carries out the reaction 4 Fe(2+) + O2 + 4 H(+) = 4 Fe(3+) + 2 H2O. The catalysed reaction is Fe(2+)(in) = Fe(2+)(out). In terms of biological role, iron-storage protein, whose ferroxidase center binds Fe(2+), oxidizes it using dioxygen to Fe(3+), and participates in the subsequent Fe(3+) oxide mineral core formation within the central cavity of the BFR protein shell. Functionally, may act as one of the electron carriers in the reverse electron-transport system from cytochrome c-552 to NADP(+). The polypeptide is Bacterioferritin (bfr) (Nitrobacter winogradskyi (Nitrobacter agilis)).